The primary structure comprises 277 residues: Undecaprenyl-diphosphatase (277 aa).

5 helical membrane passes run 85-105 (VNIV…AGAI), 109-129 (LFAP…ILWV), 188-208 (ATEF…VYSV), 218-238 (ADIP…FLCV), and 256-276 (YRIG…VVWA).

It belongs to the UppP family.

It is found in the cell inner membrane. The catalysed reaction is di-trans,octa-cis-undecaprenyl diphosphate + H2O = di-trans,octa-cis-undecaprenyl phosphate + phosphate + H(+). Functionally, catalyzes the dephosphorylation of undecaprenyl diphosphate (UPP). Confers resistance to bacitracin. This is Undecaprenyl-diphosphatase from Herminiimonas arsenicoxydans.